Here is a 159-residue protein sequence, read N- to C-terminus: MADPALFEFLHTEMVAELWAQDPDPGPGGQKTSLLVLEGMGFRVGQALGERLPRETLTFREELDILKFLCKDLWVAVFHKQMDSLRTNHQGTYVLQDNSFPLLVRMASGLQYLEEAPKFLAFTCGLLRGTLSTLGVKSLVTASVAALPACKFQVVIQKL.

Ser33 is subject to Phosphoserine.

The protein belongs to the TRAPP small subunits family. BET3 subfamily. In terms of assembly, part of the multisubunit transport protein particle (TRAPP) complex. Heterodimer with TRAPPC3. The heterodimer TRAPPC3-TRAPPC6A interacts with TRAPPC2L. Interacts with TRAPPC2L.

It localises to the golgi apparatus. It is found in the cis-Golgi network. The protein resides in the endoplasmic reticulum. May play a role in vesicular transport during the biogenesis of melanosomes. The polypeptide is Trafficking protein particle complex subunit 6A (Bos taurus (Bovine)).